We begin with the raw amino-acid sequence, 515 residues long: Histidine ammonia-lyase (515 aa).

A cross-link (5-imidazolinone (Ala-Gly)) is located at residues 142–144 (ASG). Ser143 carries the post-translational modification 2,3-didehydroalanine (Ser).

It belongs to the PAL/histidase family. Post-translationally, contains an active site 4-methylidene-imidazol-5-one (MIO), which is formed autocatalytically by cyclization and dehydration of residues Ala-Ser-Gly.

The protein localises to the cytoplasm. The enzyme catalyses L-histidine = trans-urocanate + NH4(+). It functions in the pathway amino-acid degradation; L-histidine degradation into L-glutamate; N-formimidoyl-L-glutamate from L-histidine: step 1/3. In Methylobacterium nodulans (strain LMG 21967 / CNCM I-2342 / ORS 2060), this protein is Histidine ammonia-lyase.